The following is a 344-amino-acid chain: AI-2 transport protein TqsA (344 aa).

Over 1 to 4 the chain is Cytoplasmic; it reads MAKP. The chain crosses the membrane as a helical span at residues 5-25; the sequence is IITLNGLKIVIMLGMLVIILC. The Periplasmic portion of the chain corresponds to 26-30; that stretch reads GIRFA. A helical membrane pass occupies residues 31 to 51; that stretch reads AEIIVPFILALFIAVILNPLV. The Cytoplasmic segment spans residues 52–61; it reads QHMVRWRVPR. Residues 62 to 82 form a helical membrane-spanning segment; it reads VLAVSILMTIIVMAMVLLLAY. Residues 83-149 lie on the Periplasmic side of the membrane; it reads LGSALNELTR…LLTQLSNAMS (67 aa). A helical transmembrane segment spans residues 150–170; that stretch reads SIFLLLLTVLFMLLEVPQLPG. The Cytoplasmic segment spans residues 171 to 196; it reads KFQQMMARPVEGMAAIQRAIDSVSHY. A helical transmembrane segment spans residues 197-217; the sequence is LVLKTAISIITGLVAWAMLAA. The Periplasmic segment spans residues 218–221; the sequence is LDVR. Residues 222 to 242 form a helical membrane-spanning segment; it reads FAFVWGLLAFALNYIPNIGSV. Over 243-257 the chain is Cytoplasmic; the sequence is LAAIPPIAQVLVFNG. Residues 258 to 278 form a helical membrane-spanning segment; that stretch reads FYEALLVLAGYLLINLVFGNI. Over 279–292 the chain is Periplasmic; the sequence is LEPRIMGRGLGLST. A helical membrane pass occupies residues 293-313; sequence LVVFLSLIFWGWLLGPVGMLL. Residues 314 to 344 lie on the Cytoplasmic side of the membrane; the sequence is SVPLTIIVKIALEQTAGGQSIAVLLSDLNKE.

It belongs to the autoinducer-2 exporter (AI-2E) (TC 2.A.86) family.

It is found in the cell inner membrane. It catalyses the reaction (2R,4S)-2-methyltetrahydrofuran-2,3,3,4-tetrol(in) = (2R,4S)-2-methyltetrahydrofuran-2,3,3,4-tetrol(out). Involved in the transport of the quorum-sensing signal autoinducer 2 (AI-2). Controls the transport of AI-2 either by enhancing its secretion or inhibiting its uptake and consequently represses biofilm formation and motility and affects the global gene expression in biofilms. This is AI-2 transport protein TqsA from Escherichia coli (strain K12).